A 284-amino-acid polypeptide reads, in one-letter code: Phosphatidylglycerol--prolipoprotein diacylglyceryl transferase (284 aa).

Transmembrane regions (helical) follow at residues 14 to 34 (IAFSLGSIEVHWYGLAYACAI), 62 to 82 (YFLWAELGIVLGARIGYILIY), 106 to 126 (FVGIRGMSYHGGLVGFLIASY), 136 to 156 (LLIYLDLIAISLPLGYVFGRI), 190 to 210 (PSQLIEAFLEGVIVFLMVMWA), 218 to 238 (GLLIVVYGLGYSLMRFIAEFY), and 252 to 272 (LSMGQILSLFMVIVSLGILLY). A 1,2-diacyl-sn-glycero-3-phospho-(1'-sn-glycerol) is bound at residue Arg-155.

Belongs to the Lgt family.

Its subcellular location is the cell inner membrane. The enzyme catalyses L-cysteinyl-[prolipoprotein] + a 1,2-diacyl-sn-glycero-3-phospho-(1'-sn-glycerol) = an S-1,2-diacyl-sn-glyceryl-L-cysteinyl-[prolipoprotein] + sn-glycerol 1-phosphate + H(+). The protein operates within protein modification; lipoprotein biosynthesis (diacylglyceryl transfer). Its function is as follows. Catalyzes the transfer of the diacylglyceryl group from phosphatidylglycerol to the sulfhydryl group of the N-terminal cysteine of a prolipoprotein, the first step in the formation of mature lipoproteins. This is Phosphatidylglycerol--prolipoprotein diacylglyceryl transferase from Helicobacter pylori (strain ATCC 700392 / 26695) (Campylobacter pylori).